Consider the following 446-residue polypeptide: Transcription factor Dp-2 (446 aa).

Residue threonine 2 is modified to N-acetylthreonine. 2 positions are modified to phosphoserine; by CDK2: serine 24 and serine 42. Residues 60–82 (PQMIISTPQRIANSGSVLIGNPY) are interaction with CEBPA. The Nuclear localization signal motif lies at 103–118 (SDRKRAREFIDSDFSE). Serine 122 carries the post-translational modification Phosphoserine. Residues 129–210 (GKGLRHFSMK…PTGKKRNQVD (82 aa)) mediate DNA binding. The short motif at 176-210 (DQENIRRRVYDALNVLMAMNIISSLPTGKKRNQVD) is the DEF box element. The tract at residues 219–292 (NLEIEKQRRI…RKTVIDCSIS (74 aa)) is dimerization. The segment at 229–261 (ERIKQKRAQLQELLLQQIAFKNLVQRNRQNEQQ) is DCB1. The tract at residues 274-330 (LPFIIINTSRKTVIDCSISSDKFEYLFNFDNTFEIHDDIEVLKRMGMSFGLESGKCS) is DCB2. The interval 404–446 (LPASNSHQSSSAASHFSESRGETPCSFNDEDEEDEEEDPSSPE) is disordered. Residues 406–419 (ASNSHQSSSAASHF) show a composition bias toward low complexity. Over residues 431-446 (NDEDEEDEEEDPSSPE) the composition is skewed to acidic residues.

Belongs to the E2F/DP family. In terms of assembly, component of the DRTF1/E2F transcription factor complex. Forms heterodimers with E2F family members. The complex can interact with hypophosphorylated retinoblastoma protein RB1 and related proteins (RBL1 and RBL2) that inhibit the E2F transactivation domain. During the cell cycle, RB becomes phosphorylated in mid-to-late G1 phase, detaches from the DRTF1/E2F complex rendering E2F transcriptionally active. Interacts with GMCL. Component of the DREAM complex (also named LINC complex) at least composed of E2F4, E2F5, LIN9, LIN37, LIN52, LIN54, MYBL1, MYBL2, RBL1, RBL2, RBBP4, TFDP1 and TFDP2. The complex exists in quiescent cells where it represses cell cycle-dependent genes. It dissociates in S phase when LIN9, LIN37, LIN52 and LIN54 form a subcomplex that binds to MYBL2. The complex TFDP2:E2F1 interacts with CEBPA; the interaction prevents CEBPA binding to target gene promoters and represses its transcriptional activity. In terms of processing, phosphorylation by E2F1-bound cyclin A-CDK2, in the S phase, inhibits E2F-mediated DNA binding and transactivation. As to expression, expressed in all tissues examined. Highest levels in spleen and heart.

The protein resides in the nucleus. Can stimulate E2F-dependent transcription. Binds DNA cooperatively with E2F family members through the E2 recognition site, 5'-TTTC[CG]CGC-3', found in the promoter region of a number of genes whose products are involved in cell cycle regulation or in DNA replication. The TFDP2:E2F complex functions in the control of cell-cycle progression from G1 to S phase. The E2F1:DP complex appears to mediate both cell proliferation and apoptosis. Blocks adipocyte differentiation by repressing CEBPA binding to its target gene promoters. The sequence is that of Transcription factor Dp-2 (Tfdp2) from Mus musculus (Mouse).